Here is a 589-residue protein sequence, read N- to C-terminus: Probable translation initiation factor IF-2 (589 aa).

Residues 14–231 (LRQPIVCVLG…GLAQRFLESE (218 aa)) enclose the tr-type G domain. The G1 stretch occupies residues 23-30 (GHVDHGKT). 23 to 30 (GHVDHGKT) serves as a coordination point for GTP. The interval 48-52 (GITQR) is G2. The G3 stretch occupies residues 84–87 (DTPG). GTP-binding positions include 84–88 (DTPGH) and 138–141 (NKID). The tract at residues 138–141 (NKID) is G4. Residues 206–208 (SAK) form a G5 region.

Belongs to the TRAFAC class translation factor GTPase superfamily. Classic translation factor GTPase family. IF-2 subfamily.

Functionally, function in general translation initiation by promoting the binding of the formylmethionine-tRNA to ribosomes. Seems to function along with eIF-2. This Thermoplasma volcanium (strain ATCC 51530 / DSM 4299 / JCM 9571 / NBRC 15438 / GSS1) protein is Probable translation initiation factor IF-2.